The sequence spans 535 residues: uncharacterized protein (535 aa).

The next 6 membrane-spanning stretches (helical) occupy residues 63–83 (LTGIVVALLVVTFAFPVPSIY), 90–110 (VTFGVAPAYATLALAIGTYWI), 143–163 (VAAVHLILWDIGGALLATLYG), 168–188 (VFVTIILFSVTICGVLVATNC), 226–246 (SLGSGVPVTGIATTALYVLLV), and 258–278 (VLILSITTLIFGFLVMWILAW). One can recognise an HAMP domain in the interval 279–330 (LTAAPVRVVRAALKRVEQGDLRGDLVVFDGTELGELQRGFNAMVNGLRERER). One can recognise a Guanylate cyclase domain in the interval 362 to 486 (AVVFVDIVGS…KPVNQAARLC (125 aa)).

Belongs to the adenylyl cyclase class-3 family.

It is found in the cell membrane. This is an uncharacterized protein from Mycobacterium tuberculosis (strain ATCC 25618 / H37Rv).